A 465-amino-acid polypeptide reads, in one-letter code: tRNA modification GTPase MnmE (465 aa).

3 residues coordinate (6S)-5-formyl-5,6,7,8-tetrahydrofolate: Arg-30, Glu-92, and Arg-132. The 162-residue stretch at 227-388 (GLQVALVGRP…LIEAVLKTCG (162 aa)) folds into the TrmE-type G domain. Asn-237 serves as a coordination point for K(+). GTP is bound by residues 237–242 (NVGKSS), 256–262 (TDLPGTT), 281–284 (DTAG), and 342–345 (NKAD). Ser-241 serves as a coordination point for Mg(2+). K(+) is bound by residues Thr-256, Leu-258, and Thr-261. Thr-262 contributes to the Mg(2+) binding site. Lys-465 is a (6S)-5-formyl-5,6,7,8-tetrahydrofolate binding site.

Belongs to the TRAFAC class TrmE-Era-EngA-EngB-Septin-like GTPase superfamily. TrmE GTPase family. As to quaternary structure, homodimer. Heterotetramer of two MnmE and two MnmG subunits. K(+) serves as cofactor.

The protein localises to the cytoplasm. In terms of biological role, exhibits a very high intrinsic GTPase hydrolysis rate. Involved in the addition of a carboxymethylaminomethyl (cmnm) group at the wobble position (U34) of certain tRNAs, forming tRNA-cmnm(5)s(2)U34. This is tRNA modification GTPase MnmE from Prochlorococcus marinus (strain MIT 9303).